We begin with the raw amino-acid sequence, 460 residues long: Serine--tRNA ligase (460 aa).

255–257 provides a ligand contact to L-serine; that stretch reads TAE. Residues 286-288 and Val-302 contribute to the ATP site; that span reads RKE. Position 309 (Glu-309) interacts with L-serine. 373 to 376 lines the ATP pocket; it reads EMVS. Thr-409 serves as a coordination point for L-serine.

It belongs to the class-II aminoacyl-tRNA synthetase family. Type-1 seryl-tRNA synthetase subfamily. As to quaternary structure, homodimer. The tRNA molecule binds across the dimer.

The protein resides in the cytoplasm. The catalysed reaction is tRNA(Ser) + L-serine + ATP = L-seryl-tRNA(Ser) + AMP + diphosphate + H(+). It carries out the reaction tRNA(Sec) + L-serine + ATP = L-seryl-tRNA(Sec) + AMP + diphosphate + H(+). It participates in aminoacyl-tRNA biosynthesis; selenocysteinyl-tRNA(Sec) biosynthesis; L-seryl-tRNA(Sec) from L-serine and tRNA(Sec): step 1/1. Catalyzes the attachment of serine to tRNA(Ser). Is also able to aminoacylate tRNA(Sec) with serine, to form the misacylated tRNA L-seryl-tRNA(Sec), which will be further converted into selenocysteinyl-tRNA(Sec). This chain is Serine--tRNA ligase, found in Hyperthermus butylicus (strain DSM 5456 / JCM 9403 / PLM1-5).